The sequence spans 303 residues: MNKDQTLSHTTGRVSFKELQQIIKMGLVQGNLIPAFAGAWLAIVMTNHSFLSSIPQILLMLVGSTLIMGGACALNNYYDQDIDRIMPSKQGRPTVNDRISDRNLLMLSFGMMLIGEACLFLLNIPSGVLGLIGIVGYVSYYSIWSKRHTTWNTVVGSFPGAVPPLIGWVAIDGSLSLAAVALFLVVFCWQPIHFYALAIKRSDEYALANIPMLPSVKGFKRTRVSMFIWLVLLLPLPFLLSNLGVTFVVIATLLNLGWLALGFTTFRKESNQTKWATQMFVYSLNYLVVFFALVVVVSLIKMI.

The next 6 helical transmembrane spans lie at 25 to 45, 54 to 74, 118 to 138, 166 to 186, 230 to 250, and 280 to 300; these read MGLVQGNLIPAFAGAWLAIVM, IPQILLMLVGSTLIMGGACAL, CLFLLNIPSGVLGLIGIVGYV, IGWVAIDGSLSLAAVALFLVV, LVLLLPLPFLLSNLGVTFVVI, and FVYSLNYLVVFFALVVVVSLI.

It belongs to the UbiA prenyltransferase family. Protoheme IX farnesyltransferase subfamily. Interacts with CtaA.

It localises to the cell membrane. It catalyses the reaction heme b + (2E,6E)-farnesyl diphosphate + H2O = Fe(II)-heme o + diphosphate. The protein operates within porphyrin-containing compound metabolism; heme O biosynthesis; heme O from protoheme: step 1/1. Its function is as follows. Converts heme B (protoheme IX) to heme O by substitution of the vinyl group on carbon 2 of heme B porphyrin ring with a hydroxyethyl farnesyl side group. The sequence is that of Protoheme IX farnesyltransferase from Staphylococcus epidermidis (strain ATCC 12228 / FDA PCI 1200).